A 159-amino-acid chain; its full sequence is MSVKGQFNMRNAAADTFAMVIFSFITGMMIEVFVSGMTFEQSLASRTLSIPVNIAIAWPYGVFRDYLLRTGHRLSPSSWMKGLSDMVAYVLFQSPVYACILLAVGAGTDQIITAVTSNAFVSGALGIVYGQFLDACRRMFKVPGYCRELSHPEPQHQEM.

4 helical membrane passes run 17–37 (FAMVIFSFITGMMIEVFVSGM), 48–68 (LSIPVNIAIAWPYGVFRDYLL), 86–106 (MVAYVLFQSPVYACILLAVGA), and 110–130 (QIITAVTSNAFVSGALGIVYG).

The protein belongs to the AlaE exporter family.

The protein localises to the cell inner membrane. In terms of biological role, exports L-alanine. The polypeptide is L-alanine exporter AlaE (Photobacterium profundum (strain SS9)).